The sequence spans 386 residues: Synaptotagmin-5 (386 aa).

Residues Met-1–Pro-16 are compositionally biased toward pro residues. The tract at residues Met-1–Arg-21 is disordered. The Vesicular segment spans residues Met-1–Gln-24. Residues Gly-25–Ser-45 form a helical membrane-spanning segment. The Cytoplasmic portion of the chain corresponds to Ser-46–Pro-386. C2 domains follow at residues Gln-108–Arg-227 and Lys-239–His-372. Residues Leu-138, Asp-139, Asp-145, Asp-197, Phe-198, Asp-199, Ser-202, Asp-205, Asp-270, Asp-276, Asp-330, and Asp-332 each coordinate Ca(2+).

It belongs to the synaptotagmin family. Homodimer. Interacts with both alpha- and beta-tubulin. The cofactor is Ca(2+).

It localises to the cytoplasmic vesicle. The protein resides in the secretory vesicle. Its subcellular location is the synaptic vesicle membrane. The protein localises to the recycling endosome membrane. May be involved in Ca(2+)-dependent exocytosis of secretory vesicles through Ca(2+) and phospholipid binding to the C2 domain or may serve as Ca(2+) sensors in the process of vesicular trafficking and exocytosis. Regulates the Ca(2+)-dependent secretion of norepinephrine in PC12 cells. Required for export from the endocytic recycling compartment to the cell surface. The chain is Synaptotagmin-5 (Syt5) from Mus musculus (Mouse).